The primary structure comprises 148 residues: Ubiquitin-conjugating enzyme E2 5B (148 aa).

Residues 1 to 147 enclose the UBC core domain; the sequence is MASKRILKEL…ARSWTQKYAM (147 aa). Catalysis depends on cysteine 85, which acts as the Glycyl thioester intermediate.

Belongs to the ubiquitin-conjugating enzyme family.

It carries out the reaction S-ubiquitinyl-[E1 ubiquitin-activating enzyme]-L-cysteine + [E2 ubiquitin-conjugating enzyme]-L-cysteine = [E1 ubiquitin-activating enzyme]-L-cysteine + S-ubiquitinyl-[E2 ubiquitin-conjugating enzyme]-L-cysteine.. It functions in the pathway protein modification; protein ubiquitination. Functionally, E2 conjugating enzyme that associates with the E3 ubiquitin-protein ligase EL5 to mediate ubiquitination of target proteins. In Oryza sativa subsp. japonica (Rice), this protein is Ubiquitin-conjugating enzyme E2 5B (UBC5B).